We begin with the raw amino-acid sequence, 48 residues long: Delta-stichotoxin-Hcr1a (48 aa).

Disulfide bonds link Cys3-Cys43, Cys5-Cys33, and Cys26-Cys44. A Lysine amide; partial; in Delta-stichotoxin-Hcr1f modification is found at Lys48.

The protein belongs to the sea anemone sodium channel inhibitory toxin family. Type II subfamily. In terms of assembly, probably composed of two peptide chains of 12 and 35 residues connected by two disulfide bonds (Cys-3-Cys-43 and Cys-5-Cys-33). Delta-SHTX-Hcr1f (RTX-VI) may be the result of post-translational modification of delta-SHTX-Hcr1a (RTX-III), which would consist of Arg-13 cleavage.

The protein localises to the secreted. It localises to the nematocyst. Binds to site 3 of voltage-gated sodium channels and inhibits the inactivation process. Specifically inhibits mammalian Nav1.3/SCN3A and Nav1.6/SCN8A sodium channels, as well as insect BgNav1 and VdNav1 sodium channels. Its function is as follows. Binds to site 3 of voltage-gated sodium channels and inhibits the inactivation process. Specifically inhibits mammalian Nav1.2/SCN3A (low inhibition) and Nav1.6/SCN8A sodium channels, as well as insect BgNav1 and VdNav1 sodium channels. This is Delta-stichotoxin-Hcr1a from Radianthus crispa (Leathery sea anemone).